The primary structure comprises 160 residues: Ribosomal RNA large subunit methyltransferase H (160 aa).

Residues Gly108 and 127–132 (FGKMTW) contribute to the S-adenosyl-L-methionine site.

It belongs to the RNA methyltransferase RlmH family. Homodimer.

It is found in the cytoplasm. The enzyme catalyses pseudouridine(1915) in 23S rRNA + S-adenosyl-L-methionine = N(3)-methylpseudouridine(1915) in 23S rRNA + S-adenosyl-L-homocysteine + H(+). Functionally, specifically methylates the pseudouridine at position 1915 (m3Psi1915) in 23S rRNA. This chain is Ribosomal RNA large subunit methyltransferase H, found in Beijerinckia indica subsp. indica (strain ATCC 9039 / DSM 1715 / NCIMB 8712).